A 167-amino-acid chain; its full sequence is Large ribosomal subunit protein uL10 (167 aa).

It belongs to the universal ribosomal protein uL10 family. In terms of assembly, part of the ribosomal stalk of the 50S ribosomal subunit. The N-terminus interacts with L11 and the large rRNA to form the base of the stalk. The C-terminus forms an elongated spine to which L12 dimers bind in a sequential fashion forming a multimeric L10(L12)X complex.

Functionally, forms part of the ribosomal stalk, playing a central role in the interaction of the ribosome with GTP-bound translation factors. This Ligilactobacillus salivarius (strain UCC118) (Lactobacillus salivarius) protein is Large ribosomal subunit protein uL10.